The primary structure comprises 418 residues: Serine hydroxymethyltransferase (418 aa).

Residues Leu-121 and 125–127 each bind (6S)-5,6,7,8-tetrahydrofolate; that span reads GHL. Lys-230 carries the post-translational modification N6-(pyridoxal phosphate)lysine. 355 to 357 serves as a coordination point for (6S)-5,6,7,8-tetrahydrofolate; sequence SPF.

It belongs to the SHMT family. As to quaternary structure, homodimer. It depends on pyridoxal 5'-phosphate as a cofactor.

The protein resides in the cytoplasm. It carries out the reaction (6R)-5,10-methylene-5,6,7,8-tetrahydrofolate + glycine + H2O = (6S)-5,6,7,8-tetrahydrofolate + L-serine. Its pathway is one-carbon metabolism; tetrahydrofolate interconversion. The protein operates within amino-acid biosynthesis; glycine biosynthesis; glycine from L-serine: step 1/1. Catalyzes the reversible interconversion of serine and glycine with tetrahydrofolate (THF) serving as the one-carbon carrier. This reaction serves as the major source of one-carbon groups required for the biosynthesis of purines, thymidylate, methionine, and other important biomolecules. Also exhibits THF-independent aldolase activity toward beta-hydroxyamino acids, producing glycine and aldehydes, via a retro-aldol mechanism. This chain is Serine hydroxymethyltransferase, found in Streptococcus pyogenes serotype M1.